A 451-amino-acid polypeptide reads, in one-letter code: UDP-N-acetylmuramoylalanine--D-glutamate ligase (451 aa).

120-126 (GSNGKTT) serves as a coordination point for ATP.

It belongs to the MurCDEF family.

It localises to the cytoplasm. The enzyme catalyses UDP-N-acetyl-alpha-D-muramoyl-L-alanine + D-glutamate + ATP = UDP-N-acetyl-alpha-D-muramoyl-L-alanyl-D-glutamate + ADP + phosphate + H(+). Its pathway is cell wall biogenesis; peptidoglycan biosynthesis. Functionally, cell wall formation. Catalyzes the addition of glutamate to the nucleotide precursor UDP-N-acetylmuramoyl-L-alanine (UMA). The chain is UDP-N-acetylmuramoylalanine--D-glutamate ligase from Bacillus velezensis (strain DSM 23117 / BGSC 10A6 / LMG 26770 / FZB42) (Bacillus amyloliquefaciens subsp. plantarum).